We begin with the raw amino-acid sequence, 546 residues long: MAAKDVKFGDSARKKMLVGVNVLADAVKATLGPKGRNVVLAKSFGAPTITKDGVSVAKEIELKDAFENMGAQLVKEVASKANDAAGDGTTTATVLAQAIVNEGLKAVAAGMNPMDLKRGIDKATAAVVAELKNLSKPCADSKAIAQVGTISANSDNSIGEIIAEAMEKVGKEGVITVEEGSGLENELSVVEGMQFDRGYLSPYFVNKPDTMVAELESPLLLLVDKKISNIRELLPVLEAVAKAGRPLLIVAEDVEGEALATLVVNNMRGIVKVAAVKAPGFGDRRKAMLQDIAVLTGGQVISEEIGLTLETTTLEHLGNAKRVILSKENTTIIDGAGVDADIEARVKQIRAQIEETSSDYDREKLQERLAKLAGGVAVIKVGAGTEVEMKEKKARVEDALHATRAAVEEGVVPGGGVALVRALAAIVDLKGDNEDQNVGIALLRRAVEAPLRQITANAGDEPSVVADKVKQGSGNYGYNAATGEYGDMIEMGILDPAKVTRSALQAAASIGGLMITTEAMVADLPEDKPAGGMPDMGGMGGMGGMM.

Residues 30–33, K51, 87–91, G415, 479–481, and D495 contribute to the ATP site; these read TLGP, DGTTT, and NAA.

This sequence belongs to the chaperonin (HSP60) family. In terms of assembly, forms a cylinder of 14 subunits composed of two heptameric rings stacked back-to-back. Interacts with the co-chaperonin GroES.

The protein resides in the cytoplasm. The catalysed reaction is ATP + H2O + a folded polypeptide = ADP + phosphate + an unfolded polypeptide.. In terms of biological role, together with its co-chaperonin GroES, plays an essential role in assisting protein folding. The GroEL-GroES system forms a nano-cage that allows encapsulation of the non-native substrate proteins and provides a physical environment optimized to promote and accelerate protein folding. The protein is Chaperonin GroEL of Pseudomonas putida (strain W619).